The following is a 264-amino-acid chain: Thymidylate synthase (264 aa).

DUMP is bound at residue Arg-21. Residue His-51 participates in (6R)-5,10-methylene-5,6,7,8-tetrahydrofolate binding. 126–127 is a dUMP binding site; it reads RR. Cys-146 (nucleophile) is an active-site residue. DUMP is bound by residues 166–169, Asn-177, and 207–209; these read RSCD and HLY. Asp-169 lines the (6R)-5,10-methylene-5,6,7,8-tetrahydrofolate pocket. Ala-263 contacts (6R)-5,10-methylene-5,6,7,8-tetrahydrofolate.

Belongs to the thymidylate synthase family. Bacterial-type ThyA subfamily. As to quaternary structure, homodimer.

It localises to the cytoplasm. The enzyme catalyses dUMP + (6R)-5,10-methylene-5,6,7,8-tetrahydrofolate = 7,8-dihydrofolate + dTMP. It functions in the pathway pyrimidine metabolism; dTTP biosynthesis. In terms of biological role, catalyzes the reductive methylation of 2'-deoxyuridine-5'-monophosphate (dUMP) to 2'-deoxythymidine-5'-monophosphate (dTMP) while utilizing 5,10-methylenetetrahydrofolate (mTHF) as the methyl donor and reductant in the reaction, yielding dihydrofolate (DHF) as a by-product. This enzymatic reaction provides an intracellular de novo source of dTMP, an essential precursor for DNA biosynthesis. This chain is Thymidylate synthase, found in Shewanella baltica (strain OS223).